The chain runs to 330 residues: Mucin-15 (330 aa).

An N-terminal signal peptide occupies residues 1–23 (MLTSAKILLISILSSLLLFGSHG). A disordered region spans residues 23-115 (GEEGQKTNTT…SPRSPSTHSF (93 aa)). Over 24 to 232 (EEGQKTNTTE…SDPQEENRNT (209 aa)) the chain is Extracellular. Residues Asn-30, Asn-44, Asn-54, Asn-71, Asn-79, Asn-89, Asn-94, Asn-122, Asn-138, Asn-147, Asn-154, Asn-162, Asn-175, Asn-214, and Asn-221 are each glycosylated (N-linked (GlcNAc...) asparagine). Polar residues predominate over residues 42-56 (MENQSVPLESKANLT). The span at 86-115 (FYSNLSTDNSSRSPSLMPTLSPRSPSTHSF) shows a compositional bias: polar residues. Residues 164–185 (SITVSNLPSGPNTTSVTPMVTE) are disordered. A helical transmembrane segment spans residues 233–253 (GVVFGAILGAILGASLLSLVG). Over 254–330 (YLLCGKRKTD…DDIPPLRTSV (77 aa)) the chain is Cytoplasmic. The interval 279 to 330 (LRLDNAPEPYDMSFGNSSYYNPTANDSSTSAGGENAHDSIPMDDIPPLRTSV) is disordered. The segment covering 292 to 310 (FGNSSYYNPTANDSSTSAG) has biased composition (polar residues).

In terms of processing, highly glycosylated (N- and O-linked carbohydrates). As to expression, mainly expressed on apical surfaces of the mammary epithelial cells.

It localises to the cell membrane. It is found in the secreted. The protein is Mucin-15 (MUC15) of Bos taurus (Bovine).